Here is a 225-residue protein sequence, read N- to C-terminus: UPF0758 protein BCB4264_A4572 (225 aa).

Positions S103 to I225 constitute an MPN domain. Residues H174, H176, and D187 each coordinate Zn(2+). Residues H174–D187 carry the JAMM motif motif.

The protein belongs to the UPF0758 family.

This is UPF0758 protein BCB4264_A4572 from Bacillus cereus (strain B4264).